A 294-amino-acid polypeptide reads, in one-letter code: Cytidine deaminase (294 aa).

CMP/dCMP-type deaminase domains follow at residues 48-168 (DEDA…FGPK) and 186-294 (LTGD…VLLG). A substrate-binding site is contributed by 89–91 (NME). Position 102 (His-102) interacts with Zn(2+). Glu-104 acts as the Proton donor in catalysis. Zn(2+) contacts are provided by Cys-129 and Cys-132.

Belongs to the cytidine and deoxycytidylate deaminase family. In terms of assembly, homodimer. Zn(2+) is required as a cofactor.

The catalysed reaction is cytidine + H2O + H(+) = uridine + NH4(+). The enzyme catalyses 2'-deoxycytidine + H2O + H(+) = 2'-deoxyuridine + NH4(+). In terms of biological role, this enzyme scavenges exogenous and endogenous cytidine and 2'-deoxycytidine for UMP synthesis. This chain is Cytidine deaminase, found in Salmonella paratyphi A (strain ATCC 9150 / SARB42).